Here is a 453-residue protein sequence, read N- to C-terminus: tRNA modification GTPase MnmE (453 aa).

3 residues coordinate (6S)-5-formyl-5,6,7,8-tetrahydrofolate: R22, E79, and K119. Residues 215–376 enclose the TrmE-type G domain; the sequence is GMKVVIAGRP…LKQHLKSLMG (162 aa). N225 lines the K(+) pocket. Residues 225–230, 244–250, 269–272, and 334–337 each bind GTP; these read NAGKSS, TEIAGTT, DTAG, and NKAD. Residue S229 coordinates Mg(2+). The K(+) site is built by T244, I246, and T249. T250 contributes to the Mg(2+) binding site. K453 is a binding site for (6S)-5-formyl-5,6,7,8-tetrahydrofolate.

This sequence belongs to the TRAFAC class TrmE-Era-EngA-EngB-Septin-like GTPase superfamily. TrmE GTPase family. In terms of assembly, homodimer. Heterotetramer of two MnmE and two MnmG subunits. The cofactor is K(+).

It is found in the cytoplasm. In terms of biological role, exhibits a very high intrinsic GTPase hydrolysis rate. Involved in the addition of a carboxymethylaminomethyl (cmnm) group at the wobble position (U34) of certain tRNAs, forming tRNA-cmnm(5)s(2)U34. The polypeptide is tRNA modification GTPase MnmE (Shewanella halifaxensis (strain HAW-EB4)).